The primary structure comprises 1176 residues: Translation initiation factor IF-2 (1176 aa).

Composition is skewed to low complexity over residues 32-44 (IAAKSHSSSISDS), 57-79 (ASPSQPTAPAAKPAPAKPAAGKS), 94-166 (APVA…AAPS), and 193-235 (KPTP…VKPT). Disordered regions lie at residues 32–502 (IAAK…QRQK) and 535–567 (RPAKPKAQQRTAPKPVAAVRKRRKETARQRQRR). Residues 251–270 (APPPASTPRPAPSRPTPRPA) show a composition bias toward pro residues. Composition is skewed to low complexity over residues 388-409 (GRPGAPTRPGAPTRPGMPGGMR) and 439-469 (NRPTEAAGTATPPVARPTAPSAPRRPGFRPG). The span at 478–492 (GRPDWDDSAKLEALR) shows a compositional bias: basic and acidic residues. The segment covering 553–567 (VRKRRKETARQRQRR) has biased composition (basic residues). In terms of domain architecture, tr-type G spans 668 to 840 (RRPPVVTVMG…LLLVTEVEDL (173 aa)). The tract at residues 677–684 (GHVDHGKT) is G1. 677–684 (GHVDHGKT) provides a ligand contact to GTP. The interval 702–706 (GITQH) is G2. Residues 727 to 730 (DTPG) form a G3 region. GTP-binding positions include 727-731 (DTPGH) and 781-784 (NKID). Residues 781–784 (NKID) are G4. Residues 817-819 (SAI) form a G5 region.

This sequence belongs to the TRAFAC class translation factor GTPase superfamily. Classic translation factor GTPase family. IF-2 subfamily.

It localises to the cytoplasm. In terms of biological role, one of the essential components for the initiation of protein synthesis. Protects formylmethionyl-tRNA from spontaneous hydrolysis and promotes its binding to the 30S ribosomal subunits. Also involved in the hydrolysis of GTP during the formation of the 70S ribosomal complex. The chain is Translation initiation factor IF-2 from Synechococcus sp. (strain CC9902).